The chain runs to 199 residues: Cytochrome c oxidase assembly protein CtaG (199 aa).

The Cytoplasmic portion of the chain corresponds to 1–12; the sequence is MTNTPQTPPKER. Residues 13-35 traverse the membrane as a helical; Signal-anchor for type II membrane protein segment; that stretch reads ANGVIVGACLAFVAGMVGMAYAA. The Periplasmic segment spans residues 36-199; that stretch reads VPLYDMFCRV…VKDGETENRL (164 aa).

Belongs to the COX11/CtaG family.

It localises to the cell inner membrane. Functionally, exerts its effect at some terminal stage of cytochrome c oxidase synthesis, probably by being involved in the insertion of the copper B into subunit I. This is Cytochrome c oxidase assembly protein CtaG from Sinorhizobium fredii (strain NBRC 101917 / NGR234).